The primary structure comprises 237 residues: Cytosolic-abundant heat soluble protein 1 (237 aa).

Composition is skewed to basic and acidic residues over residues 1-17 (MPYEKHVEQTVVEKTEQ) and 91-105 (VDMRPSPKLAEEARR). Disordered stretches follow at residues 1-35 (MPYEKHVEQTVVEKTEQPGHSSTHHAPAQRTVARE) and 85-105 (SGASTEVDMRPSPKLAEEARR). The stretch at 98 to 201 (KLAEEARRDA…KEALERSRMA (104 aa)) forms a coiled coil. CAHS motif stretches follow at residues 132–150 (YRHQTEAEAEKIRRELEKQ) and 169–187 (QKREVDLEAKMAKRELDRE). The tract at residues 212–237 (AGHTVSGGTTVSSVDKVETVRERKHH) is disordered. Residues 226-237 (DKVETVRERKHH) are compositionally biased toward basic and acidic residues.

It belongs to the Cytosolic-abundant heat soluble protein (CAHS) family.

It localises to the cytoplasm. The protein localises to the nucleus. In terms of biological role, CAHS proteins are cytosolic heat soluble proteins that seem to contribute to the anhydrobiosis in tardigrades, but their specific mechanisms are yet to be identified. It is possible that protection during anhydrobiosis might occur via the stabilization of vitrifying small molecules such as sugars, but not via the direct glass transition of CAHS proteins themselves. The chain is Cytosolic-abundant heat soluble protein 1 from Ramazzottius varieornatus (Water bear).